The sequence spans 823 residues: Zygotic DNA replication licensing factor mcm6 (823 aa).

Residues 159 to 186 (CLDCQTLVRDVEQQFKYTQPSICRNPVC) form a C4-type zinc finger. One can recognise an MCM domain in the interval 347-554 (LYHNLCTSLF…TDYAIARRIV (208 aa)). ATP is bound at residue 397–404 (GDPSTAKS). Positions 529–532 (SRFD) match the Arginine finger motif. Residues 666–713 (NLDQEDEHEAEEEPQEVINGDASVPSGVNGHVNGMNGHAEEPNAATPK) form a disordered region. Residues 667–680 (LDQEDEHEAEEEPQ) show a composition bias toward acidic residues. Residues 692–702 (GVNGHVNGMNG) are compositionally biased toward low complexity.

The protein belongs to the MCM family. As to quaternary structure, component of the mcm2-7 complex (RLF-M). The complex forms a toroidal hexameric ring with the proposed subunit order mcm2-mcm6-mcm4-mcm7-mcm3-mcm5. Begins to associate with zmcm3, mcm4 and mcm7 into mcm complexes at the neurula stage.

Its subcellular location is the nucleus. The catalysed reaction is ATP + H2O = ADP + phosphate + H(+). Acts as a component of the mcm2-7 complex (mcm complex) which is the putative replicative helicase essential for 'once per cell cycle' DNA replication initiation and elongation in eukaryotic cells. The active ATPase sites in the mcm2-7 ring are formed through the interaction surfaces of two neighboring subunits such that a critical structure of a conserved arginine finger motif is provided in trans relative to the ATP-binding site of the Walker A box of the adjacent subunit. The six ATPase active sites, however, are likely to contribute differentially to the complex helicase activity. The existence of maternal and zygotic forms of mcm3 and mcm6 suggests that specific forms of mcm2-7 complexes may be used during different stages of development. May replace mmcm6 in the mcm2-7 complex. The protein is Zygotic DNA replication licensing factor mcm6 of Xenopus tropicalis (Western clawed frog).